The chain runs to 132 residues: Small ribosomal subunit protein uS8 (132 aa).

Belongs to the universal ribosomal protein uS8 family. Part of the 30S ribosomal subunit. Contacts proteins S5 and S12.

Its function is as follows. One of the primary rRNA binding proteins, it binds directly to 16S rRNA central domain where it helps coordinate assembly of the platform of the 30S subunit. This Afipia carboxidovorans (strain ATCC 49405 / DSM 1227 / KCTC 32145 / OM5) (Oligotropha carboxidovorans) protein is Small ribosomal subunit protein uS8.